The sequence spans 155 residues: Archaemetzincin (155 aa).

Zn(2+) is bound at residue histidine 109. Glutamate 110 functions as the Proton acceptor in the catalytic mechanism. Residues histidine 113, histidine 119, cysteine 120, cysteine 125, cysteine 144, and cysteine 147 each coordinate Zn(2+).

Belongs to the peptidase M54 family. Monomer. It depends on Zn(2+) as a cofactor.

In terms of biological role, probable zinc metalloprotease whose natural substrate is unknown. The protein is Archaemetzincin of Pyrobaculum aerophilum (strain ATCC 51768 / DSM 7523 / JCM 9630 / CIP 104966 / NBRC 100827 / IM2).